The chain runs to 306 residues: tRNA pseudouridine synthase B (306 aa).

Asp48 serves as the catalytic Nucleophile.

Belongs to the pseudouridine synthase TruB family. Type 1 subfamily.

The catalysed reaction is uridine(55) in tRNA = pseudouridine(55) in tRNA. In terms of biological role, responsible for synthesis of pseudouridine from uracil-55 in the psi GC loop of transfer RNAs. The polypeptide is tRNA pseudouridine synthase B (Haemophilus influenzae (strain 86-028NP)).